The chain runs to 195 residues: Imidazoleglycerol-phosphate dehydratase (195 aa).

The protein belongs to the imidazoleglycerol-phosphate dehydratase family.

It localises to the cytoplasm. It catalyses the reaction D-erythro-1-(imidazol-4-yl)glycerol 3-phosphate = 3-(imidazol-4-yl)-2-oxopropyl phosphate + H2O. It participates in amino-acid biosynthesis; L-histidine biosynthesis; L-histidine from 5-phospho-alpha-D-ribose 1-diphosphate: step 6/9. In Bacillus cytotoxicus (strain DSM 22905 / CIP 110041 / 391-98 / NVH 391-98), this protein is Imidazoleglycerol-phosphate dehydratase.